The following is a 768-amino-acid chain: Glucoamylase S2 (768 aa).

The first 21 residues, 1–21 (MQRPFLLAYLVLSLLFNSALG), serve as a signal peptide directing secretion. 2 disordered regions span residues 29-83 (RGSS…ETTI) and 125-149 (TTTVPCSTSPSETASESTTTSPTTP). The span at 30–48 (GSSSSNITSSGPSSTPFSS) shows a compositional bias: low complexity. Asn35 is a glycosylation site (N-linked (GlcNAc...) asparagine). Residues 49 to 66 (ATESFSTGTTVTPSSSKY) are compositionally biased toward polar residues. 2 stretches are compositionally biased toward low complexity: residues 71 to 83 (TETSVSSTTETTI) and 131 to 149 (STSPSETASESTTTSPTTP). Asn309, Asn323, Asn415, Asn424, and Asn435 each carry an N-linked (GlcNAc...) asparagine glycan. The h subunit stretch occupies residues 349-692 (VSIERIFENI…ASTTLYQLIY (344 aa)). Residue Trp456 participates in substrate binding. N-linked (GlcNAc...) asparagine glycosylation occurs at Asn514. Asp519 acts as the Proton acceptor in catalysis. Glu522 (proton donor) is an active-site residue. Residues Asn547, Asn646, Asn651, Asn721, and Asn742 are each glycosylated (N-linked (GlcNAc...) asparagine). The y subunit stretch occupies residues 693 to 768 (RHISEQHDLV…LKATWEQTGN (76 aa)).

Belongs to the glycosyl hydrolase 15 family.

The catalysed reaction is Hydrolysis of terminal (1-&gt;4)-linked alpha-D-glucose residues successively from non-reducing ends of the chains with release of beta-D-glucose.. The chain is Glucoamylase S2 (STA2) from Saccharomyces cerevisiae (Baker's yeast).